Reading from the N-terminus, the 104-residue chain is Large ribosomal subunit protein bL27 (104 aa).

A propeptide spanning residues 1–15 is cleaved from the precursor; that stretch reads MNNKYFLTKIDLQFF.

The protein belongs to the bacterial ribosomal protein bL27 family. Post-translationally, the N-terminus is cleaved by ribosomal processing cysteine protease Prp.

The chain is Large ribosomal subunit protein bL27 from Mycoplasma pneumoniae (strain ATCC 29342 / M129 / Subtype 1) (Mycoplasmoides pneumoniae).